The primary structure comprises 257 residues: Global transcriptional regulator CodY (257 aa).

The GAF domain stretch occupies residues 1–155 (MSLLSKTREL…AATVLGMEIL (155 aa)). Positions 203 to 222 (ASKVADRVGITRSVIVNALR) form a DNA-binding region, H-T-H motif.

The protein belongs to the CodY family.

It is found in the cytoplasm. In terms of biological role, DNA-binding global transcriptional regulator which is involved in the adaptive response to starvation and acts by directly or indirectly controlling the expression of numerous genes in response to nutrient availability. During rapid exponential growth, CodY is highly active and represses genes whose products allow adaptation to nutrient depletion. This Staphylococcus carnosus (strain TM300) protein is Global transcriptional regulator CodY.